Consider the following 916-residue polypeptide: MQRSIMSFFQPTKEGKAKKPEKETPSSIREKEPPPKVALKERNQVVPESDSPVKRTGRKVAQVLSCEGEDEDEAPGTPKVQKPVSDSEQSSPPSPDTCPENSPVFNCSSPMDISPSGFPKRRTARKQLPKRTIQDTLEEQNEDKTKTAKKRKKEEETPKESLAEAEDIKQKEEKEGDQLIVPSEPTKSPESVTLTKTENIPVCKAGVKLKPQEEEQSKPPARGAKTLSSFFTPRKPAVKTEVKQEESGTLRKEETKGTLDPANYNPSKNNYHPIEDACWKHGQKVPFLAVARTFEKIEEVSARLKMVETLSNLLRSVVALSPPDLLPVLYLSLNRLGPPQQGLELGVGDGVLLKAVAQATGRQLESIRAEVAEKGDVGLVAENSRSTQRLMLPPPPLTISGVFTKFCDIARLTGSASMAKKMDIIKGLFVACRHSEARYIARSLSGRLRLGLAEQSVLAALAQAVSLTPPGQEFPTVVVDAGKGKTAEARKMWLEEQGMILKQTFCEVPDLDRIIPVLLEHGLERLPEHCKLSPGVPLKPMLAHPTRGVSEVLKRFEEVDFTCEYKYDGQRAQIHVLEGGEVKIFSRNQEDNTGKYPDIISRIPKIKHPSVTSFILDTEAVAWDREKKQIQPFQVLTTRKRKEVDASEIQVQVCLYAFDLIYLNGESLVRQPLSRRRQLLRENFVETEGEFVFTTSLDTKDTEQIAEFLEQSVKDSCEGLMVKTLDVDATYEIAKRSHNWLKLKKDYLDGVGDTLDLVVIGAYLGRGKRAGRYGGFLLAAYDEESEELQAICKLGTGFSDEELEEHHQSLQALVLPTPRPYVRIDGAVAPDHWLDPSIVWEVKCADLSLSPIYPAARGLVDKEKGISLRFPRFIRVRKDKQPEQATTSNQVASLYRKQSQIQNQQSSDLDSDVEDY.

A compositionally biased stretch (polar residues) spans 1 to 10 (MQRSIMSFFQ). Residues 1–197 (MQRSIMSFFQ…SPESVTLTKT (197 aa)) are disordered. Over residues 13-43 (KEGKAKKPEKETPSSIREKEPPPKVALKERN) the composition is skewed to basic and acidic residues. Phosphoserine occurs at positions 49, 51, and 65. Position 77 is a phosphothreonine (threonine 77). The span at 99 to 111 (PENSPVFNCSSPM) shows a compositional bias: polar residues. Residues 119 to 129 (PKRRTARKQLP) are compositionally biased toward basic residues. Lysine 144 carries the post-translational modification N6-acetyllysine. Basic and acidic residues predominate over residues 153–177 (KEEETPKESLAEAEDIKQKEEKEGD). Over residues 185-197 (PTKSPESVTLTKT) the composition is skewed to polar residues. Threonine 193 is modified (phosphothreonine). The residue at position 225 (lysine 225) is an N6-acetyllysine. Phosphoserine occurs at positions 228 and 229. At threonine 232 the chain carries Phosphothreonine. Positions 236 to 266 (PAVKTEVKQEESGTLRKEETKGTLDPANYNP) are disordered. The span at 238 to 257 (VKTEVKQEESGTLRKEETKG) shows a compositional bias: basic and acidic residues. An interaction with target DNA region spans residues 447-456 (RLRLGLAEQS). ATP is bound at residue glutamate 564. The active-site N6-AMP-lysine intermediate is lysine 566. The ATP site is built by arginine 571 and glutamate 619. Glutamate 619 contributes to the Mg(2+) binding site. Residues 640 to 642 (KRK) form an interaction with target DNA region. Glutamate 718 serves as a coordination point for Mg(2+). The ATP site is built by lysine 723 and lysine 742. Threonine 796 carries the post-translational modification Phosphothreonine. 4 positions are modified to phosphoserine: serine 799, serine 906, serine 907, and serine 911. Residues 879–916 (DKQPEQATTSNQVASLYRKQSQIQNQQSSDLDSDVEDY) form a disordered region. The span at 883–908 (EQATTSNQVASLYRKQSQIQNQQSSD) shows a compositional bias: polar residues.

This sequence belongs to the ATP-dependent DNA ligase family. As to quaternary structure, interacts with PCNA. Interacts with POLB. Requires Mg(2+) as cofactor.

It localises to the nucleus. It catalyses the reaction ATP + (deoxyribonucleotide)n-3'-hydroxyl + 5'-phospho-(deoxyribonucleotide)m = (deoxyribonucleotide)n+m + AMP + diphosphate.. In terms of biological role, DNA ligase that seals nicks in double-stranded during DNA repair. Also involved in DNA replication and DNA recombination. In Mus musculus (Mouse), this protein is DNA ligase 1 (Lig1).